The sequence spans 159 residues: Ribosomal RNA large subunit methyltransferase H (159 aa).

S-adenosyl-L-methionine is bound by residues Leu76, Gly108, and Phe127–Leu132.

It belongs to the RNA methyltransferase RlmH family. Homodimer.

The protein localises to the cytoplasm. It catalyses the reaction pseudouridine(1915) in 23S rRNA + S-adenosyl-L-methionine = N(3)-methylpseudouridine(1915) in 23S rRNA + S-adenosyl-L-homocysteine + H(+). Specifically methylates the pseudouridine at position 1915 (m3Psi1915) in 23S rRNA. The polypeptide is Ribosomal RNA large subunit methyltransferase H (Streptococcus uberis (strain ATCC BAA-854 / 0140J)).